A 173-amino-acid polypeptide reads, in one-letter code: Xanthine-guanine phosphoribosyltransferase (173 aa).

Residues 48 to 49 and 107 to 115 contribute to the 5-phospho-alpha-D-ribose 1-diphosphate site; these read RG and DDLVDTGKT. Aspartate 108 provides a ligand contact to Mg(2+). Aspartate 111 and isoleucine 154 together coordinate guanine. Positions 111 and 154 each coordinate xanthine. GMP is bound by residues 111–115 and 153–154; these read DTGKT and WI.

The protein belongs to the purine/pyrimidine phosphoribosyltransferase family. XGPT subfamily. In terms of assembly, homotetramer. Requires Mg(2+) as cofactor.

The protein resides in the cell inner membrane. The enzyme catalyses GMP + diphosphate = guanine + 5-phospho-alpha-D-ribose 1-diphosphate. The catalysed reaction is XMP + diphosphate = xanthine + 5-phospho-alpha-D-ribose 1-diphosphate. It carries out the reaction IMP + diphosphate = hypoxanthine + 5-phospho-alpha-D-ribose 1-diphosphate. Its pathway is purine metabolism; GMP biosynthesis via salvage pathway; GMP from guanine: step 1/1. It functions in the pathway purine metabolism; XMP biosynthesis via salvage pathway; XMP from xanthine: step 1/1. Purine salvage pathway enzyme that catalyzes the transfer of the ribosyl-5-phosphate group from 5-phospho-alpha-D-ribose 1-diphosphate (PRPP) to the N9 position of the 6-oxopurines guanine and xanthine to form the corresponding ribonucleotides GMP (guanosine 5'-monophosphate) and XMP (xanthosine 5'-monophosphate), with the release of PPi. To a lesser extent, also acts on hypoxanthine. The chain is Xanthine-guanine phosphoribosyltransferase from Rhodopseudomonas palustris (strain ATCC BAA-98 / CGA009).